The primary structure comprises 84 residues: Large ribosomal subunit protein bL31B (84 aa).

Belongs to the bacterial ribosomal protein bL31 family. Type B subfamily. As to quaternary structure, part of the 50S ribosomal subunit.

In Bacteroides thetaiotaomicron (strain ATCC 29148 / DSM 2079 / JCM 5827 / CCUG 10774 / NCTC 10582 / VPI-5482 / E50), this protein is Large ribosomal subunit protein bL31B.